The primary structure comprises 296 residues: 4-hydroxybenzoate octaprenyltransferase (296 aa).

Transmembrane regions (helical) follow at residues 28 to 48 (PIGI…AGNG), 52 to 72 (LANV…GCCI), 102 to 122 (ALAL…CTNS), 145 to 167 (TYYP…FTAA), 174 to 196 (SAWL…YAMV), 219 to 239 (NIIL…GSRF), 241 to 261 (LGGW…WEYW), and 275 to 295 (FLHN…DYAF).

It belongs to the UbiA prenyltransferase family. It depends on Mg(2+) as a cofactor.

The protein resides in the cell inner membrane. It carries out the reaction all-trans-octaprenyl diphosphate + 4-hydroxybenzoate = 4-hydroxy-3-(all-trans-octaprenyl)benzoate + diphosphate. Its pathway is cofactor biosynthesis; ubiquinone biosynthesis. In terms of biological role, catalyzes the prenylation of para-hydroxybenzoate (PHB) with an all-trans polyprenyl group. Mediates the second step in the final reaction sequence of ubiquinone-8 (UQ-8) biosynthesis, which is the condensation of the polyisoprenoid side chain with PHB, generating the first membrane-bound Q intermediate 3-octaprenyl-4-hydroxybenzoate. This is 4-hydroxybenzoate octaprenyltransferase from Pseudomonas putida (strain GB-1).